Consider the following 610-residue polypeptide: Sterol O-acyltransferase 1 (610 aa).

2 positions are modified to phosphoserine: Ser-21 and Ser-45. Positions 41 to 81 (SMEVSPRSSTTSLVEPVESTEGVESTEAERVAGKQEQEEEY) are disordered. The segment covering 67 to 76 (EAERVAGKQE) has biased composition (basic and acidic residues). The next 5 helical transmembrane spans lie at 182–202 (LESN…WIAI), 229–249 (LFTI…VVFV), 264–284 (GFVA…PIYV), 371–391 (ISCS…QINY), and 409–429 (IIGT…PVAM). Residues 491 to 497 (FYGDWWN) carry the FYXDWWN motif motif. The next 2 helical transmembrane spans lie at 535 to 555 (ATLF…FAIF) and 590 to 610 (VVFS…YLTL). His-547 is an active-site residue.

Belongs to the membrane-bound acyltransferase family. Sterol o-acyltransferase subfamily.

The protein resides in the endoplasmic reticulum membrane. The enzyme catalyses lanosterol + an acyl-CoA = lanosteryl ester + CoA. Sterol O-acyltransferase that catalyzes the formation of stery esters. This is Sterol O-acyltransferase 1 from Saccharomyces cerevisiae (strain ATCC 204508 / S288c) (Baker's yeast).